Consider the following 420-residue polypeptide: FAD-dependent monooxygenase ntnJ (420 aa).

The helical transmembrane segment at 12 to 31 (FRVIVVGAGIGGLSAAVALA) threads the bilayer. 2 residues coordinate FAD: E41 and A54. N-linked (GlcNAc...) asparagine glycosylation is present at N124. R187 is a catalytic residue. An N-linked (GlcNAc...) asparagine glycan is attached at N264. FAD contacts are provided by D302 and V315.

The protein belongs to the paxM FAD-dependent monooxygenase family. FAD is required as a cofactor.

Its subcellular location is the membrane. The protein operates within secondary metabolite biosynthesis; terpenoid biosynthesis. In terms of biological role, FAD-dependent monooxygenase; part of the gene cluster that mediates the biosynthesis of the meroterpenoids nectripenoids A and B, as well as cochliquninone D and isocochliquninone E. The pathway probably begins with the HR-PKS ntnH that catalyzes two chain-extension steps to form a reduced triketide, which then primes the SAT domain in the NR-PKS ntnG to initiate three more cycles of extension to give a linear hexaketide corresponding to the polyketide part of nectripenoids. The FAD-dependent monooxygenase ntnJ then performs an oxidative decarboxylation at C11 of the ntnH/ntnG product, via an electrophilic aromatic hydroxylation with concomitant ipso-decarboxylation. The membrane-bound polyprenyl transferase ntnF then introduces a farnesyl group before the FAD-dependent monooxygenase ntnK functions as the first epoxidase on terminal C12'-C13' olefin, followed by a second epoxidation on C7'-C8' catalyzed by ntnA. The terpene cyclase/mutase ntnI then initiates the sequential tricyclic ring formation through protonation of the terminal epoxide and catalyzes the regioselective and stereoselective 6/6/6-tricyclic ring formation. The cytochrome P450 monooxygenase ntnM may then hydroxylate C1'. The protein is FAD-dependent monooxygenase ntnJ of Nectria sp.